The primary structure comprises 186 residues: Elongation factor P (186 aa).

This sequence belongs to the elongation factor P family.

It localises to the cytoplasm. It functions in the pathway protein biosynthesis; polypeptide chain elongation. In terms of biological role, involved in peptide bond synthesis. Stimulates efficient translation and peptide-bond synthesis on native or reconstituted 70S ribosomes in vitro. Probably functions indirectly by altering the affinity of the ribosome for aminoacyl-tRNA, thus increasing their reactivity as acceptors for peptidyl transferase. This is Elongation factor P from Streptococcus pneumoniae (strain Hungary19A-6).